The primary structure comprises 134 residues: Protein Turandot E (134 aa).

A signal peptide spans 1–38; sequence MSYTRTIHSSASILKMNSALQISCLLVVLGCLLGSGHC.

It belongs to the Turandot family.

The protein localises to the secreted. Functionally, a humoral factor that may play a role in stress tolerance. The chain is Protein Turandot E from Drosophila sechellia (Fruit fly).